A 157-amino-acid chain; its full sequence is Crossover junction endodeoxyribonuclease RuvC (157 aa).

Residues Asp-7, Glu-67, and Asp-140 contribute to the active site. Residues Asp-7, Glu-67, and Asp-140 each coordinate Mg(2+).

The protein belongs to the RuvC family. In terms of assembly, homodimer which binds Holliday junction (HJ) DNA. The HJ becomes 2-fold symmetrical on binding to RuvC with unstacked arms; it has a different conformation from HJ DNA in complex with RuvA. In the full resolvosome a probable DNA-RuvA(4)-RuvB(12)-RuvC(2) complex forms which resolves the HJ. It depends on Mg(2+) as a cofactor.

The protein localises to the cytoplasm. The catalysed reaction is Endonucleolytic cleavage at a junction such as a reciprocal single-stranded crossover between two homologous DNA duplexes (Holliday junction).. Its function is as follows. The RuvA-RuvB-RuvC complex processes Holliday junction (HJ) DNA during genetic recombination and DNA repair. Endonuclease that resolves HJ intermediates. Cleaves cruciform DNA by making single-stranded nicks across the HJ at symmetrical positions within the homologous arms, yielding a 5'-phosphate and a 3'-hydroxyl group; requires a central core of homology in the junction. The consensus cleavage sequence is 5'-(A/T)TT(C/G)-3'. Cleavage occurs on the 3'-side of the TT dinucleotide at the point of strand exchange. HJ branch migration catalyzed by RuvA-RuvB allows RuvC to scan DNA until it finds its consensus sequence, where it cleaves and resolves the cruciform DNA. The polypeptide is Crossover junction endodeoxyribonuclease RuvC (Rickettsia conorii (strain ATCC VR-613 / Malish 7)).